The sequence spans 201 residues: Ribosome maturation factor RimP (201 aa).

This sequence belongs to the RimP family.

It localises to the cytoplasm. Required for maturation of 30S ribosomal subunits. This chain is Ribosome maturation factor RimP, found in Acidobacterium capsulatum (strain ATCC 51196 / DSM 11244 / BCRC 80197 / JCM 7670 / NBRC 15755 / NCIMB 13165 / 161).